Reading from the N-terminus, the 667-residue chain is DNA ligase (667 aa).

Residues 32–36 (DSEYD), 81–82 (SL), and E110 contribute to the NAD(+) site. K112 (N6-AMP-lysine intermediate) is an active-site residue. Residues R133, E167, K283, and K307 each coordinate NAD(+). The Zn(2+) site is built by C401, C404, C419, and C424. Positions 586–667 (EGHPEFSGKT…FVDKQNELNS (82 aa)) constitute a BRCT domain.

This sequence belongs to the NAD-dependent DNA ligase family. LigA subfamily. Mg(2+) is required as a cofactor. Requires Mn(2+) as cofactor.

The enzyme catalyses NAD(+) + (deoxyribonucleotide)n-3'-hydroxyl + 5'-phospho-(deoxyribonucleotide)m = (deoxyribonucleotide)n+m + AMP + beta-nicotinamide D-nucleotide.. DNA ligase that catalyzes the formation of phosphodiester linkages between 5'-phosphoryl and 3'-hydroxyl groups in double-stranded DNA using NAD as a coenzyme and as the energy source for the reaction. It is essential for DNA replication and repair of damaged DNA. The sequence is that of DNA ligase from Staphylococcus aureus (strain MRSA252).